We begin with the raw amino-acid sequence, 657 residues long: Glycogen debranching enzyme (657 aa).

Asp-336 (nucleophile) is an active-site residue. Residue Glu-371 is the Proton donor of the active site. The span at 458–467 (NEANGEENRD) shows a compositional bias: basic and acidic residues. Residues 458 to 479 (NEANGEENRDGTNNNYSNNHGK) are disordered.

The protein belongs to the glycosyl hydrolase 13 family.

It catalyses the reaction Hydrolysis of (1-&gt;6)-alpha-D-glucosidic linkages to branches with degrees of polymerization of three or four glucose residues in limit dextrin.. It functions in the pathway glycan degradation; glycogen degradation. Removes maltotriose and maltotetraose chains that are attached by 1,6-alpha-linkage to the limit dextrin main chain, generating a debranched limit dextrin. This is Glycogen debranching enzyme from Escherichia coli (strain 55989 / EAEC).